The primary structure comprises 326 residues: Protein phosphatase PTC7 homolog fig (326 aa).

Positions 40–83 (VQGKSKPRSPHLTSPQCSPEHRPRRFRPPSASGRTAFSSAPRPK) are disordered. The region spanning 64-314 (RFRPPSASGR…DDITVVLASV (251 aa)) is the PPM-type phosphatase domain. Mn(2+) contacts are provided by aspartate 91, glycine 92, and aspartate 236.

The protein belongs to the PP2C family. The cofactor is Mg(2+). Mn(2+) is required as a cofactor.

It carries out the reaction O-phospho-L-seryl-[protein] + H2O = L-seryl-[protein] + phosphate. The catalysed reaction is O-phospho-L-threonyl-[protein] + H2O = L-threonyl-[protein] + phosphate. In Drosophila persimilis (Fruit fly), this protein is Protein phosphatase PTC7 homolog fig.